The primary structure comprises 162 residues: Ubiquitin-fold modifier-conjugating enzyme 1 (162 aa).

The Glycyl thioester intermediate role is filled by cysteine 115.

Belongs to the ubiquitin-conjugating enzyme family. UFC1 subfamily. As to quaternary structure, interacts with uba-5.

Its function is as follows. E2-like enzyme which forms an intermediate with ufm-1. The intermediate is formed via a thioester linkage. This is Ubiquitin-fold modifier-conjugating enzyme 1 from Caenorhabditis briggsae.